The primary structure comprises 268 residues: uncharacterized protein (268 aa).

The next 3 helical transmembrane spans lie at 169–189 (AIIY…QGFA), 190–210 (GVKT…LWLL), and 225–245 (IFAG…LSVF).

Its subcellular location is the cell membrane. This is an uncharacterized protein from Bacillus subtilis (strain 168).